We begin with the raw amino-acid sequence, 492 residues long: FAD-containing monooxygenase EthA (492 aa).

Residues serine 15, glutamate 36, 44 to 47 (TWDL), aspartate 56, and valine 104 contribute to the FAD site. Residue 54-56 (RSD) coordinates NADP(+). Residues 183-189 (SGATAVT) and 207-208 (RS) contribute to the NADP(+) site.

This sequence belongs to the FAD-binding monooxygenase family. Requires FAD as cofactor.

The protein resides in the cell membrane. It catalyses the reaction ethionamide + NADPH + O2 + H(+) = ethionamide S-oxide + NADP(+) + H2O. Its function is as follows. Monooxygenase able to convert a wide range of ketones to the corresponding esters or lactones via a Baeyer-Villiger oxidation reaction. Can act on long-chain aliphatic ketones (2-hexanone to 2-dodecanone) and on aromatic ketones (phenylacetone and benzylacetone). Is also able to catalyze enantioselective sulfoxidation of methyl-p-tolylsulfide. In vivo, likely functions as a BVMO, but the exact nature of the physiological substrate(s) remains to be established. Is responsible for the activation of several thiocarbamide-containing pro-drugs, such as ethionamide (ETH), isoxyl (ISO) and thiacetazone (TAC), into reactive species. The sequence is that of FAD-containing monooxygenase EthA (ethA) from Mycolicibacterium smegmatis (strain ATCC 700084 / mc(2)155) (Mycobacterium smegmatis).